We begin with the raw amino-acid sequence, 540 residues long: Cytochrome P450 monooxygenase ptmG (540 aa).

N-linked (GlcNAc...) asparagine glycosylation is present at Asn-17. 2 helical membrane-spanning segments follow: residues Val-20–Ile-40 and Ala-325–Leu-345. Cys-474 provides a ligand contact to heme.

The protein belongs to the cytochrome P450 family. Heme is required as a cofactor.

It is found in the membrane. The protein operates within secondary metabolite biosynthesis. In terms of biological role, cytochrome P450 monooxygenase; part of the gene cluster that mediates the biosynthesis of the indole diterpenes penitrems. The geranylgeranyl diphosphate (GGPP) synthase ptmG catalyzes the first step in penitrem biosynthesis via conversion of farnesyl pyrophosphate and isopentyl pyrophosphate into geranylgeranyl pyrophosphate (GGPP). Condensation of indole-3-glycerol phosphate with GGPP by the prenyl transferase ptmC then forms 3-geranylgeranylindole (3-GGI). Epoxidation by the FAD-dependent monooxygenase ptmM leads to a epoxidized-GGI that is substrate of the terpene cyclase ptmB for cyclization to yield paspaline. Paspaline is subsequently converted to 13-desoxypaxilline by the cytochrome P450 monooxygenase ptmP, the latter being then converted to paxilline by the cytochrome P450 monooxygenase ptmQ. Paxilline is converted to beta-paxitriol via C-10 ketoreduction by the short-chain dehydrogenase ptmH which can be monoprenylated at the C-20 by the indole diterpene prenyltransferase ptmD. A two-step elimination (acetylation and elimination) process performed by the O-acetyltransferase ptmV and ptmI leads to the production of the prenylated form of penijanthine. The FAD-linked oxidoreductase ptmO then converts the prenylated form of penijanthine into PC-M5 which is in turn transformed into PC-M4 by the aromatic dimethylallyltransferase ptmE. Five sequential oxidative transformations performed by the cytochrome P450 monooxygenases ptmK, ptmU, ptmL, ptmN and ptmJ yield the various penitrem compounds. PtmK, ptmU and ptmM are involved in the formation of the key bicyclic ring of penitrem C via the formation of the intermediates secopenitrem D and penitrem D. PtmL catalyzes the epoxidation of penitrem D and C to yield penitrem B and F, respectively. PtmJ catalyzes the last benzylic hydroxylation to convert penitrem B to prenitrem E and penitrem F to penitrem A. This chain is Cytochrome P450 monooxygenase ptmG, found in Penicillium ochrochloron.